Reading from the N-terminus, the 320-residue chain is Malate dehydrogenase (320 aa).

Residues 10-15 (GAGQIG) and D34 contribute to the NAD(+) site. R83 and R89 together coordinate substrate. NAD(+)-binding positions include N96 and 119–121 (ITN). Positions 121 and 152 each coordinate substrate. H176 (proton acceptor) is an active-site residue.

It belongs to the LDH/MDH superfamily. MDH type 3 family.

The enzyme catalyses (S)-malate + NAD(+) = oxaloacetate + NADH + H(+). In terms of biological role, catalyzes the reversible oxidation of malate to oxaloacetate. This is Malate dehydrogenase from Methylobacterium radiotolerans (strain ATCC 27329 / DSM 1819 / JCM 2831 / NBRC 15690 / NCIMB 10815 / 0-1).